Consider the following 129-residue polypeptide: Small ribosomal subunit protein uS11 (129 aa).

The segment at 107-129 (IEDVTPVPHDSIRGKGGRRGRRV) is disordered.

Belongs to the universal ribosomal protein uS11 family. As to quaternary structure, part of the 30S ribosomal subunit.

Functionally, located on the platform of the 30S subunit. The sequence is that of Small ribosomal subunit protein uS11 from Methanoculleus marisnigri (strain ATCC 35101 / DSM 1498 / JR1).